The following is a 431-amino-acid chain: Glucose-1-phosphate adenylyltransferase (431 aa).

A beta-D-fructose 1,6-bisphosphate-binding site is contributed by K39. Residues R40, H46, and R52 each contribute to the AMP site. Y114 contributes to the alpha-D-glucose 1-phosphate binding site. AMP is bound at residue R130. Residues G179, 194 to 195 (EK), and S212 contribute to the alpha-D-glucose 1-phosphate site. E370 and R386 together coordinate AMP. Beta-D-fructose 1,6-bisphosphate contacts are provided by residues 419–423 (REMLR) and 429–431 (QER).

The protein belongs to the bacterial/plant glucose-1-phosphate adenylyltransferase family. In terms of assembly, homotetramer.

It carries out the reaction alpha-D-glucose 1-phosphate + ATP + H(+) = ADP-alpha-D-glucose + diphosphate. It participates in glycan biosynthesis; glycogen biosynthesis. Allosterically activated by fructose-1,6-bisphosphate (F16BP) and inhibited by AMP. Functionally, involved in the biosynthesis of ADP-glucose, a building block required for the elongation reactions to produce glycogen. Catalyzes the reaction between ATP and alpha-D-glucose 1-phosphate (G1P) to produce pyrophosphate and ADP-Glc. This Escherichia coli O45:K1 (strain S88 / ExPEC) protein is Glucose-1-phosphate adenylyltransferase.